Here is a 391-residue protein sequence, read N- to C-terminus: Geranylgeranyl diphosphate reductase (391 aa).

It belongs to the geranylgeranyl reductase family. ChlP subfamily.

The enzyme catalyses phytyl diphosphate + 3 NADP(+) = geranylgeranyl diphosphate + 3 NADPH + 3 H(+). The protein operates within porphyrin-containing compound metabolism; bacteriochlorophyll biosynthesis (light-independent). Its function is as follows. Catalyzes the stepwise hydrogenation of geranylgeraniol to phytol during bacteriochlorophyll A (BchlA) biosynthesis. This is Geranylgeranyl diphosphate reductase (bchP) from Rhodobacter capsulatus (strain ATCC BAA-309 / NBRC 16581 / SB1003).